The following is a 96-amino-acid chain: MNLRPLHDRVIIKRLDQESKTASGIIIPDAAAEKPDQGEVLAVGPGKRDDGGKLNAPDVKVGDRVLFGKYAGQTVKVDSEELIVMREDDIMAVVQK.

Belongs to the GroES chaperonin family. As to quaternary structure, heptamer of 7 subunits arranged in a ring. Interacts with the chaperonin GroEL.

It localises to the cytoplasm. Together with the chaperonin GroEL, plays an essential role in assisting protein folding. The GroEL-GroES system forms a nano-cage that allows encapsulation of the non-native substrate proteins and provides a physical environment optimized to promote and accelerate protein folding. GroES binds to the apical surface of the GroEL ring, thereby capping the opening of the GroEL channel. This chain is Co-chaperonin GroES, found in Polynucleobacter necessarius subsp. necessarius (strain STIR1).